Reading from the N-terminus, the 236-residue chain is 7-cyano-7-deazaguanine synthase (236 aa).

12 to 22 (FSGGQDSTTCL) serves as a coordination point for ATP. Residues cysteine 200, cysteine 215, cysteine 218, and cysteine 221 each contribute to the Zn(2+) site.

The protein belongs to the QueC family. Zn(2+) is required as a cofactor.

The catalysed reaction is 7-carboxy-7-deazaguanine + NH4(+) + ATP = 7-cyano-7-deazaguanine + ADP + phosphate + H2O + H(+). The protein operates within purine metabolism; 7-cyano-7-deazaguanine biosynthesis. Its function is as follows. Catalyzes the ATP-dependent conversion of 7-carboxy-7-deazaguanine (CDG) to 7-cyano-7-deazaguanine (preQ(0)). This Bradyrhizobium sp. (strain ORS 278) protein is 7-cyano-7-deazaguanine synthase.